The sequence spans 223 residues: Sigma non-opioid intracellular receptor 1 (223 aa).

Over 1-9 (MPWAVGRRW) the chain is Lumenal. The interval 2–8 (PWAVGRR) is targeting to endoplasmic reticulum-associated lipid droplets. A helical transmembrane segment spans residues 10–30 (AWITLFLTIVAVLIQAVWLWL). Residues 31–223 (GTQSFVFQRE…LTTYLFGQDP (193 aa)) lie on the Cytoplasmic side of the membrane. The tract at residues 99–106 (SLSEYVLL) is important for ligand-binding. The C-terminal hydrophobic region stretch occupies residues 177–223 (VIPSTLAFALSDTIFSTQDFLTLFYTLRAYARGLRLELTTYLFGQDP).

Belongs to the ERG2 family. Homotrimer. Interacts with KCNA2; cocaine consumption leads to increased interaction. Forms a ternary complex with ANK2 and ITPR3. The complex is disrupted by agonists. Interacts with KCNA4. Interacts with RNF112 in an oxidative stress-regulated manner. Expressed in ependymocytes and neurons throughout the CNS from the olfactory bulb to the spinal cord. Expressed by progenitor, mature and satellite oligodendrocytes and by Schwann cells (at protein level). Expressed in liver, intestine, kidney, brain, lung and heart. Expressed by retinal cells.

The protein localises to the nucleus inner membrane. The protein resides in the nucleus outer membrane. It localises to the nucleus envelope. It is found in the cytoplasmic vesicle. Its subcellular location is the endoplasmic reticulum membrane. The protein localises to the membrane. The protein resides in the lipid droplet. It localises to the cell junction. It is found in the cell membrane. Its subcellular location is the cell projection. The protein localises to the growth cone. The protein resides in the postsynaptic density membrane. Functions in lipid transport from the endoplasmic reticulum and is involved in a wide array of cellular functions probably through regulation of the biogenesis of lipid microdomains at the plasma membrane. Involved in the regulation of different receptors it plays a role in BDNF signaling and EGF signaling. Also regulates ion channels like the potassium channel and could modulate neurotransmitter release. Plays a role in calcium signaling through modulation together with ANK2 of the ITP3R-dependent calcium efflux at the endoplasmic reticulum. Plays a role in several other cell functions including proliferation, survival and death. Originally identified for its ability to bind various psychoactive drugs it is involved in learning processes, memory and mood alteration. Necessary for proper mitochondrial axonal transport in motor neurons, in particular the retrograde movement of mitochondria. Plays a role in protecting cells against oxidative stress-induced cell death via its interaction with RNF112. The sequence is that of Sigma non-opioid intracellular receptor 1 (Sigmar1) from Rattus norvegicus (Rat).